The sequence spans 90 residues: RNA-binding protein Hfq (90 aa).

Residues 9–69 (DRFLNHLRVN…ISTIIPSSYV (61 aa)) enclose the Sm domain.

Belongs to the Hfq family. As to quaternary structure, homohexamer.

Its function is as follows. RNA chaperone that binds small regulatory RNA (sRNAs) and mRNAs to facilitate mRNA translational regulation in response to envelope stress, environmental stress and changes in metabolite concentrations. Also binds with high specificity to tRNAs. The sequence is that of RNA-binding protein Hfq from Thermotoga petrophila (strain ATCC BAA-488 / DSM 13995 / JCM 10881 / RKU-1).